We begin with the raw amino-acid sequence, 186 residues long: Membrane protein Rv1476 (186 aa).

A helical transmembrane segment spans residues 138–158 (FPWSALTIVLLIGVLAAAVGA). Residues 166 to 186 (RRSATSTDAAPGAGDDLNQGV) form a disordered region.

It localises to the membrane. May affect the expression of genes linked to host macrophage apoptosis and immune response, thereby promoting the survival of M.tuberculosis in host macrophages. Overexpression of the gene increases susceptibility of the bacteria to various stresses, but promotes intracellular survival in host macrophages. It has no impact on the growth rate in vitro. Overexpression causes changes in the transcriptome of THP-1 cells, including expression of genes involved in cell proliferation, fatty acid degradation, cytokine-cytokine receptor interaction and immune response pathways. This is Membrane protein Rv1476 from Mycobacterium tuberculosis (strain ATCC 25618 / H37Rv).